The primary structure comprises 339 residues: Uridylate kinase PUMPKIN, chloroplastic (339 aa).

The N-terminal 53 residues, 1–53 (MAIPLPLTSCSPISTSSSISRTSFVPLTLRNRTFFSNQNYSRRVLISCSSSLS), are a transit peptide targeting the chloroplast. The span at 52-79 (LSSDNGSSPDSMNGNGNGNGSSLNGQSS) shows a compositional bias: low complexity. The segment at 52-89 (LSSDNGSSPDSMNGNGNGNGSSLNGQSSFPRLPSFDGT) is disordered. 102 to 105 (KVSG) serves as a coordination point for ATP. Residues 110–115 (GDEEQN) form an involved in allosteric activation by GTP region. G144 lines the UMP pocket. Residues G145 and R149 each contribute to the ATP site. Position 165 (D165) interacts with UMP. ATP-binding positions include 180–184 (QATME) and 189–191 (PTR). 226–233 (TGNPFFTT) is a binding site for UMP. Positions 253, 259, and 262 each coordinate ATP.

It belongs to the UMP kinase family. Homomultimer. Homohexamer. Forms RNA-containing megadalton-sized complexes. In terms of tissue distribution, expressed exclusively in leaves, but not in roots.

It localises to the plastid. Its subcellular location is the chloroplast stroma. It carries out the reaction UMP + ATP = UDP + ADP. The protein operates within pyrimidine metabolism; CTP biosynthesis via de novo pathway; UDP from UMP (UMPK route): step 1/1. Functionally, catalyzes the reversible phosphorylation of UMP to UDP. Required for specific post-transcriptional processes of many plastid transcripts (e.g. PSI (PsaA, PsaF), PSII (D1, CP43, CP47), Cytochrome b(6)f (Cytb(6)), ATP synthase (AtpC), LHCs (LHCa3, LHCb2), and NDH (NdhH)), thus being essential for retaining photosynthetic activity in chloroplasts. Associates with group II introns of the plastid transcripts trnG-UCC, trnV-UAC, petB, petD and ndhA to stabilize corresponding precursor RNAs. The sequence is that of Uridylate kinase PUMPKIN, chloroplastic from Arabidopsis thaliana (Mouse-ear cress).